Reading from the N-terminus, the 336-residue chain is Galactose/methyl galactoside import permease protein MglC (336 aa).

9 helical membrane passes run 17–37 (GIYV…PTFL), 53–73 (IIIA…LSAG), 107–127 (LVIL…GIII), 128–148 (AYLN…VYGI), 181–201 (FRLS…WVLW), 227–247 (VALN…FGGL), 257–277 (TNNL…VGGV), 279–299 (FSGG…FTVI), and 306–326 (IGVN…FAVA).

Belongs to the binding-protein-dependent transport system permease family. AraH/RbsC subfamily. As to quaternary structure, the complex is composed of one ATP-binding protein (MglA), two transmembrane proteins (MglC) and a solute-binding protein (MglB).

The protein localises to the cell inner membrane. Its function is as follows. Part of the ABC transporter complex MglABC involved in galactose/methyl galactoside import. Probably responsible for the translocation of the substrate across the membrane. The protein is Galactose/methyl galactoside import permease protein MglC (mglC) of Salmonella typhimurium (strain LT2 / SGSC1412 / ATCC 700720).